A 360-amino-acid polypeptide reads, in one-letter code: Zinc metalloproteinase nas-5 (360 aa).

The signal sequence occupies residues 1 to 21 (MDIKQLLLSIILTVSVVNGRG). A Peptidase M12A domain is found at 61–269 (NALLSNSPLR…KKVCAIYHCS (209 aa)). A glycan (N-linked (GlcNAc...) asparagine) is linked at Asn108. 2 disulfides stabilise this stretch: Cys111–Cys268 and Cys134–Cys157. Zn(2+) is bound at residue His165. Residue Glu166 is part of the active site. Residues His169 and His175 each coordinate Zn(2+). The 38-residue stretch at 299 to 336 (QGDSCTDRLGICPMLKSREMLNCKVMATFCCSSCSAPT) folds into the PLAC domain.

Requires Zn(2+) as cofactor.

It localises to the secreted. Its function is as follows. Metalloprotease. This chain is Zinc metalloproteinase nas-5 (nas-5), found in Caenorhabditis elegans.